The sequence spans 574 residues: Septation ring formation regulator EzrA (574 aa).

The Extracellular segment spans residues 1–7; the sequence is MSSGIVL. Residues 8-26 form a helical membrane-spanning segment; sequence LIVAIVLVVIIAYLIAIII. Residues 27 to 574 are Cytoplasmic-facing; it reads RKRNDSLITK…YEKTRETIRF (548 aa). Coiled-coil stretches lie at residues 102-141, 255-368, and 409-495; these read NFIR…EEKN, KNIE…KDVL, and LKNI…EETA.

This sequence belongs to the EzrA family.

The protein localises to the cell membrane. Its function is as follows. Negative regulator of FtsZ ring formation; modulates the frequency and position of FtsZ ring formation. Inhibits FtsZ ring formation at polar sites. Interacts either with FtsZ or with one of its binding partners to promote depolymerization. This Streptococcus mutans serotype c (strain ATCC 700610 / UA159) protein is Septation ring formation regulator EzrA.